Here is a 313-residue protein sequence, read N- to C-terminus: WD repeat-containing protein 82-B (313 aa).

6 WD repeats span residues 19–58 (ENSD…PKRT), 105–144 (GHSK…CQGL), 146–184 (HLQG…KGPF), 192–231 (DRTC…VMHT), 236–276 (NNSK…KVAV), and 280–313 (KHTG…TIDD).

This sequence belongs to the WD repeat SWD2 family. In terms of assembly, component of the SET1/COMPASS complex. Component of the PNUTS-PP1 phosphatase complex.

Its subcellular location is the nucleus. It localises to the chromosome. The protein resides in the cytoplasm. In terms of biological role, regulatory component of the SET1/COMPASS complex implicated in the tethering of this complex to transcriptional start sites of active genes. Facilitates histone H3 'Lys-4' methylation (H3K4me) via recruitment of the SETD1A or SETD1B to the 'Ser-5' phosphorylated C-terminal domain (CTD) of RNA polymerase II large subunit (POLR2A). Component of the PNUTS-PP1 protein phosphatase complex, a protein phosphatase 1 (PP1) complex that promotes RNA polymerase II transcription pause-release, allowing transcription elongation. In Xenopus laevis (African clawed frog), this protein is WD repeat-containing protein 82-B (wdr82-b).